Consider the following 87-residue polypeptide: Small ribosomal subunit protein uS15 (87 aa).

This sequence belongs to the universal ribosomal protein uS15 family. As to quaternary structure, part of the 30S ribosomal subunit. Forms a bridge to the 50S subunit in the 70S ribosome, contacting the 23S rRNA.

Its function is as follows. One of the primary rRNA binding proteins, it binds directly to 16S rRNA where it helps nucleate assembly of the platform of the 30S subunit by binding and bridging several RNA helices of the 16S rRNA. Forms an intersubunit bridge (bridge B4) with the 23S rRNA of the 50S subunit in the ribosome. This Alkaliphilus metalliredigens (strain QYMF) protein is Small ribosomal subunit protein uS15.